Consider the following 429-residue polypeptide: Adenylosuccinate synthetase (429 aa).

GTP is bound by residues 12–18 (GDEGKGK) and 40–42 (GHT). Aspartate 13 acts as the Proton acceptor in catalysis. Positions 13 and 40 each coordinate Mg(2+). IMP contacts are provided by residues 13–16 (DEGK), 38–41 (NAGH), threonine 127, arginine 141, glutamine 222, threonine 237, and arginine 301. The Proton donor role is filled by histidine 41. Position 297-303 (297-303 (ATTGRPR)) interacts with substrate. GTP-binding positions include arginine 303, 329–331 (KLD), and 411–413 (SLG).

It belongs to the adenylosuccinate synthetase family. Homodimer. Requires Mg(2+) as cofactor.

The protein localises to the cytoplasm. The catalysed reaction is IMP + L-aspartate + GTP = N(6)-(1,2-dicarboxyethyl)-AMP + GDP + phosphate + 2 H(+). Its pathway is purine metabolism; AMP biosynthesis via de novo pathway; AMP from IMP: step 1/2. Its function is as follows. Plays an important role in the de novo pathway of purine nucleotide biosynthesis. Catalyzes the first committed step in the biosynthesis of AMP from IMP. This is Adenylosuccinate synthetase from Endomicrobium trichonymphae.